Here is a 162-residue protein sequence, read N- to C-terminus: Non-specific lipid transfer protein GPI-anchored 27 (162 aa).

The N-terminal stretch at 1–29 (MAYTNKVAVAVGAAVVFLAVVMNPRWTEA) is a signal peptide. Cystine bridges form between Cys39–Cys78, Cys50–Cys62, Cys63–Cys102, and Cys76–Cys110. A glycan (N-linked (GlcNAc...) asparagine) is linked at Asn68. Residues Asn124 and Asn135 are each glycosylated (N-linked (GlcNAc...) asparagine). Residue Ser137 is the site of GPI-anchor amidated serine attachment. Positions 138–162 (VGGKNKVATSMSAFGLVAILLFVMF) are cleaved as a propeptide — removed in mature form.

Belongs to the plant LTP family.

It localises to the cell membrane. In terms of biological role, probable lipid transfer protein. The sequence is that of Non-specific lipid transfer protein GPI-anchored 27 from Arabidopsis thaliana (Mouse-ear cress).